Reading from the N-terminus, the 154-residue chain is Superoxide dismutase [Cu-Zn] (154 aa).

Residues H47, H49, and H64 each coordinate Cu cation. Residues C58 and C147 are joined by a disulfide bond. Residues H64, H72, H81, and D84 each coordinate Zn(2+). H121 contributes to the Cu cation binding site. R144 provides a ligand contact to substrate.

Belongs to the Cu-Zn superoxide dismutase family. In terms of assembly, homodimer. Cu cation serves as cofactor. It depends on Zn(2+) as a cofactor.

Its subcellular location is the cytoplasm. It is found in the mitochondrion. The protein localises to the cell membrane. It carries out the reaction 2 superoxide + 2 H(+) = H2O2 + O2. In terms of biological role, destroys radicals which are normally produced within the cells and which are toxic to biological systems. Destroys radicals produced by host defense mechanisms. This Cryptococcus neoformans var. grubii serotype A (strain H99 / ATCC 208821 / CBS 10515 / FGSC 9487) (Filobasidiella neoformans var. grubii) protein is Superoxide dismutase [Cu-Zn].